A 140-amino-acid chain; its full sequence is Pro-variola growth factor (140 aa).

The N-terminal stretch at 1–18 (MSMKYLMLLFAAMIIRSF) is a signal peptide. Residues 19–100 (ANSGNAIETT…SEKPNTTTSY (82 aa)) lie on the Extracellular side of the membrane. A glycan (N-linked (GlcNAc...) asparagine; by host) is linked at Asn34. The 41-residue stretch at 41–81 (AIRLCGPEGNGYCFHGICIHARDIDGMYCRCSHGYTGIRCQ) folds into the EGF-like domain. 3 disulfide bridges follow: Cys45/Cys58, Cys53/Cys69, and Cys71/Cys80. An N-linked (GlcNAc...) asparagine; by host glycan is attached at Asn95. Residues 101–121 (IPSPGIVLVLLVSIIMCCLLF) form a helical membrane-spanning segment. The Cytoplasmic portion of the chain corresponds to 122–140 (VYRFTRRTNKLPLQDMVVP).

Belongs to the orthopoxvirus OPG019 family. Variola growth factor interacts with host EGFR and promotes EGFR dimerization.

Its subcellular location is the host membrane. The protein localises to the secreted. Stimulates cellular proliferation (hyperplasia)and mobility around infected cells to promote rapid and efficient spread of infection. This effect is beneficial for virus replication in vivo, because poxviruses replicate possibly better in proliferating cells than in quiescent cells. Acts by binding host EGFR, inducing its dimerization, autophosphorylation and leading to activation of several cellular pathways regulating cell proliferation or cell survival. The activation by host EGFR of mitogen activated protein kinases (MAPK) and extracellular-signal regulated kinases (ERK) are essential for the positive effect of vaccinia growth factor on poxvirus virulence in vivo. The protein is Pro-variola growth factor (OPG019) of Variola virus.